Here is a 159-residue protein sequence, read N- to C-terminus: Transmembrane protein 42 (159 aa).

4 consecutive transmembrane segments (helical) span residues 37-57, 59-79, 100-120, and 124-144; these read FWGV…AASA, LAFG…VMAS, IASV…GYVL, and CQEV…TLIH.

The protein localises to the membrane. The sequence is that of Transmembrane protein 42 (TMEM42) from Homo sapiens (Human).